The sequence spans 409 residues: WW domain-containing oxidoreductase (409 aa).

A disordered region spans residues 1–23 (MIALPDTDSEDELPPGWEERATD). 2 consecutive WW domains span residues 11 to 44 (DELP…HPRT) and 52 to 86 (GELP…DPRL). 128–134 (GANCGIG) contributes to the NADP(+) binding site. Residue serine 257 coordinates substrate. The active-site Proton acceptor is tyrosine 288.

This sequence belongs to the short-chain dehydrogenases/reductases (SDR) family.

It localises to the cytoplasm. The protein resides in the mitochondrion. Its subcellular location is the golgi apparatus. It is found in the lysosome. Functionally, putative oxidoreductase. May control genotoxic stress-induced cell death. May play a role in TGFB1 signaling and TGFB1-mediated cell death. May also play a role in tumor necrosis factor (TNF)-mediated cell death. May play a role in Wnt signaling. The polypeptide is WW domain-containing oxidoreductase (Wwox) (Drosophila melanogaster (Fruit fly)).